The primary structure comprises 1674 residues: E3 ubiquitin-protein ligase SHPRH (1674 aa).

Residues 1-26 (MSSRRKRAPPMKVDEERQQQLHWNMH) form a disordered region. A compositionally biased stretch (basic and acidic residues) spans 12–26 (KVDEERQQQLHWNMH). A phosphoserine mark is found at Ser-259 and Ser-261. One can recognise a Helicase ATP-binding; first part domain in the interval 302 to 384 (YQREAVNWML…TVEVLALILT (83 aa)). 368–375 (DEMGLGKT) is a binding site for ATP. The 75-residue stretch at 433–507 (HCPPTRVMIL…GFSGTFTLGK (75 aa)) folds into the H15 domain. A disordered region spans residues 524–548 (SPRKIEKELRKSVNKDADSEYLPSN). Over residues 526–541 (RKIEKELRKSVNKDAD) the composition is skewed to basic and acidic residues. Ser-626 is modified (phosphoserine). The PHD-type zinc finger occupies 649-700 (RFECICGEFDQIGHKPRVQCLKCHLWQHAKCVNYEEKNLKVKPFYCPHCLVA). A Helicase ATP-binding; second part domain is found at 701–859 (MEPVSTRATL…FGLVVFLGIE (159 aa)). The DEAQ box signature appears at 810–813 (DEAQ). Residues 1423–1470 (CPICARQLGKQWAVLTCGHCFCNECTSIIIEQYSVGSHRSSIKCAICR) form an RING-type zinc finger. One can recognise a Helicase C-terminal domain in the interval 1505–1663 (AVVRTLMKIQ…ASVLTVAGLA (159 aa)).

Belongs to the SNF2/RAD54 helicase family. Homodimer. Interacts with HLTF, PCNA, UBE2N and RAD18. As to expression, broadly expressed (at protein level).

The catalysed reaction is S-ubiquitinyl-[E2 ubiquitin-conjugating enzyme]-L-cysteine + [acceptor protein]-L-lysine = [E2 ubiquitin-conjugating enzyme]-L-cysteine + N(6)-ubiquitinyl-[acceptor protein]-L-lysine.. It participates in protein modification; protein ubiquitination. Functionally, E3 ubiquitin-protein ligase involved in DNA repair. Upon genotoxic stress, accepts ubiquitin from the UBE2N-UBE2V2 E2 complex and transfers it to 'Lys-164' of PCNA which had been monoubiquitinated by UBE2A/B-RAD18, promoting the formation of non-canonical poly-ubiquitin chains linked through 'Lys-63'. The sequence is that of E3 ubiquitin-protein ligase SHPRH (Shprh) from Mus musculus (Mouse).